We begin with the raw amino-acid sequence, 461 residues long: Kynurenine 3-monooxygenase (461 aa).

FAD is bound by residues 17 to 18, 37 to 39, and A56; these read LA and ERR. Residues R84 and Y98 each coordinate L-kynurenine. Residues R111, L135, D311, and 324-325 each bind FAD; that span reads MN. Residues N369 and Y404 each contribute to the L-kynurenine site.

Belongs to the aromatic-ring hydroxylase family. KMO subfamily. It depends on FAD as a cofactor.

It carries out the reaction L-kynurenine + NADPH + O2 + H(+) = 3-hydroxy-L-kynurenine + NADP(+) + H2O. The protein operates within cofactor biosynthesis; NAD(+) biosynthesis; quinolinate from L-kynurenine: step 1/3. It participates in siderophore biosynthesis; quinolobactin biosynthesis. Functionally, catalyzes the hydroxylation of L-kynurenine (L-Kyn) to form 3-hydroxy-L-kynurenine (L-3OHKyn). Probably required for the synthesis of quinolinic acid and the siderophore quinolobactin. The chain is Kynurenine 3-monooxygenase from Pseudomonas fluorescens.